The chain runs to 181 residues: Transcription termination/antitermination protein NusG (181 aa).

One can recognise a KOW domain in the interval 130 to 161 (PGELVRVSDGPFADFNGVVEEVDYEKSRLKVS).

The protein belongs to the NusG family. In terms of assembly, monomer. Interacts with the transcription termination factor Rho and with RNA polymerase.

Functionally, participates in transcription elongation, termination and antitermination. In the absence of Rho, increases the rate of transcription elongation by the RNA polymerase (RNAP), probably by partially suppressing pausing. In the presence of Rho, modulates most Rho-dependent termination events by interacting with the RNAP to render the complex more susceptible to the termination activity of Rho. May be required to overcome a kinetic limitation of Rho to function at certain terminators. Also involved in ribosomal RNA transcriptional antitermination. The chain is Transcription termination/antitermination protein NusG from Yersinia pestis.